Here is a 170-residue protein sequence, read N- to C-terminus: Sec-independent protein translocase protein TatB (170 aa).

Residues 1–21 (MIDLGISKLALIGAVALIVIG) traverse the membrane as a helical segment.

The protein belongs to the TatB family. The Tat system comprises two distinct complexes: a TatABC complex, containing multiple copies of TatA, TatB and TatC subunits, and a separate TatA complex, containing only TatA subunits. Substrates initially bind to the TatABC complex, which probably triggers association of the separate TatA complex to form the active translocon.

The protein localises to the cell inner membrane. Functionally, part of the twin-arginine translocation (Tat) system that transports large folded proteins containing a characteristic twin-arginine motif in their signal peptide across membranes. Together with TatC, TatB is part of a receptor directly interacting with Tat signal peptides. TatB may form an oligomeric binding site that transiently accommodates folded Tat precursor proteins before their translocation. This is Sec-independent protein translocase protein TatB from Cupriavidus necator (strain ATCC 17699 / DSM 428 / KCTC 22496 / NCIMB 10442 / H16 / Stanier 337) (Ralstonia eutropha).